Here is a 310-residue protein sequence, read N- to C-terminus: Thiamine-monophosphate kinase (310 aa).

Asp-26, Thr-40, Ser-41, and Asp-42 together coordinate Mg(2+). Asp-49 serves as a coordination point for substrate. 2 residues coordinate Mg(2+): Asp-70 and Asp-118. Residues Gly-117 to Asp-118 and Arg-141 each bind ATP. Residue Asp-202 coordinates Mg(2+). Position 204 (Ser-204) interacts with ATP. Mg(2+) is bound at residue Asp-205. The substrate site is built by Glu-251 and Trp-299.

The protein belongs to the thiamine-monophosphate kinase family.

The enzyme catalyses thiamine phosphate + ATP = thiamine diphosphate + ADP. It participates in cofactor biosynthesis; thiamine diphosphate biosynthesis; thiamine diphosphate from thiamine phosphate: step 1/1. Functionally, catalyzes the ATP-dependent phosphorylation of thiamine-monophosphate (TMP) to form thiamine-pyrophosphate (TPP), the active form of vitamin B1. This is Thiamine-monophosphate kinase from Pyrococcus abyssi (strain GE5 / Orsay).